Reading from the N-terminus, the 319-residue chain is Red chlorophyll catabolite reductase, chloroplastic (319 aa).

The N-terminal 39 residues, 1-39, are a transit peptide targeting the chloroplast; it reads MAMIFCNTLYSSSSPSYLSPLTSKPSRFSKNLRPRAQFQ. Red chlorophyll catabolite contacts are provided by residues glutamate 154 and 207–209; that span reads YVS. The stretch at 255 to 286 forms a coiled coil; the sequence is LERCVKEEEEKIVVGEEERMELERRDKSFRRK. Aspartate 291 serves as a coordination point for red chlorophyll catabolite.

As to quaternary structure, homodimer. Interacts with HCAR. Interacts with SGR1, NYC1, NOL, PPH, PAO and the LHCII complex. Part of a SGR1-CCE-LHCII complex, which acts in chlorophyll breakdown. Expressed in all tissues tested, including roots.

Its subcellular location is the plastid. The protein resides in the chloroplast stroma. It localises to the chloroplast thylakoid membrane. It carries out the reaction primary fluorescent chlorophyll catabolite + 2 oxidized [2Fe-2S]-[ferredoxin] = red chlorophyll catabolite + 2 reduced [2Fe-2S]-[ferredoxin] + 3 H(+). It functions in the pathway porphyrin-containing compound metabolism; chlorophyll degradation. Catalyzes the key reaction of chlorophyll catabolism, porphyrin macrocycle cleavage of pheophorbide a (pheide a) to a primary fluorescent catabolite (pFCC). Works in a two-step reaction with pheophorbide a oxygenase (PaO) by reducing the C20/C1 double bond of the intermediate, RCC. Belongs to the chlorophyll catabolic enzymes (CCEs). The polypeptide is Red chlorophyll catabolite reductase, chloroplastic (Arabidopsis thaliana (Mouse-ear cress)).